The chain runs to 115 residues: uncharacterized protein (115 aa).

The region spanning 1–115 (MGVEISLDPP…ETVIKLSAAE (115 aa)) is the MSP domain.

This is an uncharacterized protein from Caenorhabditis elegans.